A 311-amino-acid polypeptide reads, in one-letter code: Acetyl-coenzyme A carboxylase carboxyl transferase subunit alpha (311 aa).

In terms of domain architecture, CoA carboxyltransferase C-terminal spans Glu32 to Gln289.

It belongs to the AccA family. Acetyl-CoA carboxylase is a heterohexamer composed of biotin carboxyl carrier protein (AccB), biotin carboxylase (AccC) and two subunits each of ACCase subunit alpha (AccA) and ACCase subunit beta (AccD).

The protein resides in the cytoplasm. The catalysed reaction is N(6)-carboxybiotinyl-L-lysyl-[protein] + acetyl-CoA = N(6)-biotinyl-L-lysyl-[protein] + malonyl-CoA. It participates in lipid metabolism; malonyl-CoA biosynthesis; malonyl-CoA from acetyl-CoA: step 1/1. In terms of biological role, component of the acetyl coenzyme A carboxylase (ACC) complex. First, biotin carboxylase catalyzes the carboxylation of biotin on its carrier protein (BCCP) and then the CO(2) group is transferred by the carboxyltransferase to acetyl-CoA to form malonyl-CoA. This chain is Acetyl-coenzyme A carboxylase carboxyl transferase subunit alpha, found in Exiguobacterium sibiricum (strain DSM 17290 / CCUG 55495 / CIP 109462 / JCM 13490 / 255-15).